Here is a 477-residue protein sequence, read N- to C-terminus: Histidine--tRNA ligase (477 aa).

It belongs to the class-II aminoacyl-tRNA synthetase family. As to quaternary structure, homodimer.

It is found in the cytoplasm. It catalyses the reaction tRNA(His) + L-histidine + ATP = L-histidyl-tRNA(His) + AMP + diphosphate + H(+). The sequence is that of Histidine--tRNA ligase (hisS) from Xanthomonas campestris pv. campestris (strain ATCC 33913 / DSM 3586 / NCPPB 528 / LMG 568 / P 25).